A 962-amino-acid polypeptide reads, in one-letter code: Rho GTPase-activating protein syd-1 (962 aa).

Disordered regions lie at residues 231-367 (GKKS…MRSD), 397-419 (PRTLRQPNDSNKSNSLPRRRIMT), and 437-471 (CGEESDGAISAPEYSSPPFSRLTQQQQFRLSNGSP). 4 stretches are compositionally biased toward polar residues: residues 243–261 (NATTTSTMRAAHASTSSPR), 323–345 (SFNSAPGVSSSAPMYTLPRSSTA), 401–412 (RQPNDSNKSNSL), and 453–471 (PPFSRLTQQQQFRLSNGSP). Residues 572-696 (RAAGPGINVD…NDDRVFALNL (125 aa)) form the C2 domain. Residues 729-923 (VPLGRLVQRE…LDMNQASSSL (195 aa)) form the Rho-GAP domain. The segment covering 934–947 (VNSESGSDSPATSG) has biased composition (polar residues). The interval 934–962 (VNSESGSDSPATSGQKGGGGVSYVSESQC) is disordered.

It is found in the synapse. Its function is as follows. Probable GTPase activator for the Rho-type GTPases by converting them to an inactive GDP-bound state. Regulates the localization and assembly of presynaptic components during presynaptic development and is required for specifying the identity of axons during initial polarity acquisition. In these roles it is thought to act cell autonomously downstream of syg-1 and syg-2 and upstream of syd-2, possibly as a positive regulator of the latter. Required for the control of movement, egg-laying and the correct localization of elks-1. The protein is Rho GTPase-activating protein syd-1 of Caenorhabditis briggsae.